The sequence spans 505 residues: MSDKDDIETPLLTEAAPILEDGNCEPAKNSESVDQGAKPESKSEPVVSTRKRPETKPSSDLETSKVLPIQDNVSKDVPQTRWGYWGSWGKSILSSASATVATVGQGISNVIEKAETSLGIPGPSEISTEVKYVAGETNAKENENSSPVAGAFGVFSTISTAVQSTGKSVISGGLDALEFIGKKTMDVIAEGDPGFKRTKGLMNRNATLSQVLREAKEKEEIRTSNEVTVETDKKTHYGLLFDEFQGLSHLEALEMLSQESEIKVKSILNSLSGEELETLKVELEQLKETFSLAEFCEEEEEEKKGDEDFTKDITELFSQLHVSSKPEKLARARNTAHEWIRKSLTKPLAENEEGEKQSEAENTEQVNKNSIEDIHAFAIRSLAELTACSIELFHKTAALVLHGRKQEVTAIERSQTLSQMTIVLCKELSSLSKEFTTCLTTAGVKEMADVLNPLITAVFLEASNSASYIQDAFQLLLPVLEISLIENKIESHRHELQGQKPLLEH.

The segment at 1-65 is disordered; sequence MSDKDDIETP…KPSSDLETSK (65 aa). Residues 51 to 63 are compositionally biased toward basic and acidic residues; it reads KRPETKPSSDLET. Phosphoserine occurs at positions 87, 146, and 209. Residues 268–295 are a coiled coil; that stretch reads LNSLSGEELETLKVELEQLKETFSLAEF. The tract at residues 342–366 is disordered; that stretch reads KSLTKPLAENEEGEKQSEAENTEQV.

The protein belongs to the FAM114 family.

In Homo sapiens (Human), this protein is Protein FAM114A2 (FAM114A2).